Consider the following 149-residue polypeptide: Small ribosomal subunit protein uS9 (149 aa).

Belongs to the universal ribosomal protein uS9 family.

The protein resides in the cytoplasm. This is Small ribosomal subunit protein uS9 (RPS16A) from Oryza sativa subsp. indica (Rice).